The chain runs to 733 residues: Serine/threonine-protein kinase ATG1c (733 aa).

The 258-residue stretch at 12-269 folds into the Protein kinase domain; it reads YLVGRQIGSG…FEEFFNHPFL (258 aa). Residues 18–26 and Lys41 each bind ATP; that span reads IGSGSFSVV. The active-site Proton acceptor is Asp134. Disordered stretches follow at residues 292-363 and 379-414; these read SSGS…ELTS and FETQ…SQDS. The span at 329-339 shows a compositional bias: polar residues; that stretch reads KKTSSMKSSSG. Composition is skewed to basic and acidic residues over residues 342–360 and 379–393; these read VDTR…KHTE and FETQ…RREP. The AIM (Atg8-family-interacting motif) signature appears at 419–422; it reads FVLV. 2 disordered regions span residues 565-596 and 713-733; these read GSPS…SHDG and HRRS…NRQS. Positions 566 to 577 are enriched in polar residues; sequence SPSQDINKLRSS. The segment covering 579 to 596 has biased composition (basic and acidic residues); that stretch reads LKHDTHSSNKVTDLSHDG. The segment covering 717–733 has biased composition (polar residues); it reads SAGQMQGSSLAMMNRQS.

The protein belongs to the protein kinase superfamily. Ser/Thr protein kinase family.

Its subcellular location is the cytoplasmic vesicle. It is found in the autophagosome. In terms of biological role, serine/threonine protein kinase involved in autophagy. The ATG1-ATG13 protein kinase complex regulates downstream events required for autophagosome enclosure and/or vacuolar delivery. This chain is Serine/threonine-protein kinase ATG1c, found in Arabidopsis thaliana (Mouse-ear cress).